Reading from the N-terminus, the 364-residue chain is Aminomethyltransferase (364 aa).

Belongs to the GcvT family. As to quaternary structure, the glycine cleavage system is composed of four proteins: P, T, L and H.

The catalysed reaction is N(6)-[(R)-S(8)-aminomethyldihydrolipoyl]-L-lysyl-[protein] + (6S)-5,6,7,8-tetrahydrofolate = N(6)-[(R)-dihydrolipoyl]-L-lysyl-[protein] + (6R)-5,10-methylene-5,6,7,8-tetrahydrofolate + NH4(+). Functionally, the glycine cleavage system catalyzes the degradation of glycine. The polypeptide is Aminomethyltransferase (Salmonella paratyphi C (strain RKS4594)).